Here is a 355-residue protein sequence, read N- to C-terminus: Protein AMBP (355 aa).

3-hydroxy-L-kynurenine is bound by residues Cys55 and Lys138. A disulfide bond links Cys92 and Cys189. An N-linked (GlcNAc...) asparagine glycan is attached at Asn145. A 3-hydroxy-L-kynurenine-binding site is contributed by Lys150. 2 N-linked (GlcNAc...) asparagine glycosylation sites follow: Asn231 and Asn255. Cystine bridges form between Cys236/Cys286, Cys245/Cys269, Cys261/Cys282, Cys292/Cys342, Cys301/Cys325, and Cys317/Cys338. 2 BPTI/Kunitz inhibitor domains span residues 236–286 (CKAA…LQRC) and 292–342 (CRLP…QEYC).

It in the N-terminal section; belongs to the calycin superfamily. Lipocalin family. As to quaternary structure, I-alpha-I plasma protease inhibitors are assembled from one or two heavy chains (H1, H2 or H3) and one light chain, bikunin. Inter-alpha-inhibitor (I-alpha-I) is composed of H1, H2 and bikunin, inter-alpha-like inhibitor (I-alpha-LI) of H2 and bikunin, and pre-alpha-inhibitor (P-alpha-I) of H3 and bikunin. Post-translationally, the precursor is proteolytically processed into two separately functioning proteins. In terms of processing, 3-hydroxykynurenine, an oxidized tryptophan metabolite that is common in biological fluids, reacts with Cys-55, Lys-138, and Lys-150 to form heterogeneous polycyclic chromophores including hydroxanthommatin. The reaction by alpha-1-microglobulin is autocatalytic. The chromophore can react with accessible cysteines forming non-reducible thioether cross-links with other molecules of alpha-1-microglobulin or with other proteins. In terms of tissue distribution, expressed by the liver and secreted in plasma.

The protein resides in the secreted. In Pleuronectes platessa (European plaice), this protein is Protein AMBP.